The primary structure comprises 591 residues: N-acetylgalactosaminyltransferase 7 (591 aa).

Residues 1–11 (MRVSTIRSGRI) lie on the Cytoplasmic side of the membrane. Residues 12–29 (CRLALCLLVLLPLLYLLA) traverse the membrane as a helical; Signal-anchor for type II membrane protein segment. N30 carries an N-linked (GlcNAc...) asparagine glycan. Residues 30–591 (NWSDHHKRVQ…WWFKEIRPRW (562 aa)) are Lumenal-facing. The tract at residues 68-100 (DGLGNFEPKDVKPRSGPGENGEAHSLSPDKKHM) is disordered. 5 cysteine pairs are disulfide-bonded: C132–C367, C358–C441, C479–C496, C519–C532, and C558–C573. The segment at 141–251 (LPRTSVIIVF…TNWLPPLLAP (111 aa)) is catalytic subdomain A. The substrate site is built by D182 and R212. Mn(2+)-binding residues include D235 and H237. The tract at residues 313-375 (PYRSPTHAGG…PCSRVGHVYR (63 aa)) is catalytic subdomain B. A substrate-binding site is contributed by W344. H372 contributes to the Mn(2+) binding site. R375 and Y380 together coordinate substrate. Residues 466-585 (LHWGELRSVA…NDSYQQWWFK (120 aa)) form the Ricin B-type lectin domain. N576 carries N-linked (GlcNAc...) asparagine glycosylation.

The protein belongs to the glycosyltransferase 2 family. GalNAc-T subfamily. It depends on Mn(2+) as a cofactor. As to expression, expressed in developing oocytes and egg chambers. During embryonic stages 9-11, expressed in the primordium of the foregut, midgut and hindgut. Expressed in the salivary glands from embryonic stage 12 onwards. During embryonic stages 12-13, expressed in the posterior midgut and hindgut. During embryonic stages 14-15, expression continues in the hindgut. During embryonic stages 16-17, expressed in the antennomaxillary complex. In third instar larvae, ubiquitously expressed in wing, with increased expression in the notum and ventral wing pouch, eye-antennal, leg and haltere imaginal disks.

It localises to the golgi apparatus membrane. The enzyme catalyses L-seryl-[protein] + UDP-N-acetyl-alpha-D-galactosamine = a 3-O-[N-acetyl-alpha-D-galactosaminyl]-L-seryl-[protein] + UDP + H(+). It catalyses the reaction L-threonyl-[protein] + UDP-N-acetyl-alpha-D-galactosamine = a 3-O-[N-acetyl-alpha-D-galactosaminyl]-L-threonyl-[protein] + UDP + H(+). It participates in protein modification; protein glycosylation. In terms of biological role, glycopeptide transferase involved in O-linked oligosaccharide biosynthesis, which catalyzes the transfer of an N-acetyl-D-galactosamine residue to an already glycosylated peptide. In contrast to other proteins of the family, it does not act as a peptide transferase that transfers GalNAc onto serine or threonine residue on the protein receptor, but instead requires the prior addition of a GalNAc on a peptide before adding additional GalNAc moieties. Some peptide transferase activity is however not excluded, considering that its appropriate peptide substrate may remain unidentified. Prefers the monoglycosylated Muc5AC-3 as substrate. Might have a role in protein O-glycosylation in the Golgi and thereby in establishing and/or maintaining a proper secretory apparatus structure. The sequence is that of N-acetylgalactosaminyltransferase 7 from Drosophila melanogaster (Fruit fly).